A 279-amino-acid chain; its full sequence is Beta-lactamase (279 aa).

The first 21 residues, M1 to A21, serve as a signal peptide directing secretion. Residue S66 is the Acyl-ester intermediate of the active site. C73 and C119 form a disulfide bridge. K230–G232 serves as a coordination point for substrate.

This sequence belongs to the class-A beta-lactamase family.

It carries out the reaction a beta-lactam + H2O = a substituted beta-amino acid. The protein is Beta-lactamase of Klebsiella pneumoniae.